Reading from the N-terminus, the 419-residue chain is Napsin-A (419 aa).

An N-terminal signal peptide occupies residues 1–16 (MSPLLLLLLCLLLGNL). Positions 73–394 (YFGTIGLGTP…KNVGPRVGLA (322 aa)) constitute a Peptidase A1 domain. The N-linked (GlcNAc...) asparagine glycan is linked to N85. D91 is a catalytic residue. A disulfide bridge connects residues C104 and C111. N128 and N149 each carry an N-linked (GlcNAc...) asparagine glycan. C269 and C273 form a disulfide bridge. Residue D278 is part of the active site. Residues C312 and C349 are joined by a disulfide bond. N331 carries N-linked (GlcNAc...) asparagine glycosylation. Residues 391–419 (VGLARAQSRSTDRAERRTTQAQFFKRRPG) form a disordered region.

The protein belongs to the peptidase A1 family. Expressed at the highest levels in the kidney, at a moderate level in the lung, and at low levels in the spleen and adipose tissue.

It is found in the secreted. In terms of biological role, may be involved in processing of pneumocyte surfactant precursors. The chain is Napsin-A (Napsa) from Mus musculus (Mouse).